Here is a 283-residue protein sequence, read N- to C-terminus: MAEITASLVKELRERTGAGMMDCKKALVEANGDIELAIENMRKSGAIKAAKKAGNVAADGVILTKIDGTYGIILEVNCQTDFVAKDGGFQAFANKVLDAAIAGKITDVDVLKAQFEEERVALVAKIGENINIRRVASIEGDVLGSYQHGARIGVLVAAKGADEELVKQLAMHIAASKPEFVKPEDVSAEVVEKEYQVQLDIAMQSGKPKEIAEKMVEGRMKKFTGEVSLTGQPFVMDPTKSVAQLLKEHNADVTGFIRFEVGEGIEKVETDFAAEVAAMSKQS.

The interval 80-83 (TDFV) is involved in Mg(2+) ion dislocation from EF-Tu.

It belongs to the EF-Ts family.

It is found in the cytoplasm. Functionally, associates with the EF-Tu.GDP complex and induces the exchange of GDP to GTP. It remains bound to the aminoacyl-tRNA.EF-Tu.GTP complex up to the GTP hydrolysis stage on the ribosome. The sequence is that of Elongation factor Ts from Enterobacter sp. (strain 638).